We begin with the raw amino-acid sequence, 860 residues long: Protein argonaute-3 (860 aa).

Residues 230–349 (PVIQFMCEVL…LPLEVCNIVA (120 aa)) form the PAZ domain. A Piwi domain is found at 518–819 (LIIVILPGKT…VAFRARYHLV (302 aa)). Positions 530-567 (YAEVKRAGDTLLGMATQCVQVKNVIKTSPQTLSNLCLK) are interaction with guide RNA. D598, E638, and D670 together coordinate a divalent metal cation. An interaction with guide RNA region spans residues 758–805 (QGTSRPSHYHVLWDDNCFTADELQLLTYQLCHTYVRCTRSVSIPAPAY). H808 is an a divalent metal cation binding site.

It belongs to the argonaute family. Ago subfamily.

It localises to the cytoplasm. The protein resides in the P-body. It catalyses the reaction Endonucleolytic cleavage to 5'-phosphomonoester.. Required for RNA-mediated gene silencing (RNAi). Binds to short RNAs such as microRNAs (miRNAs) and represses the translation of mRNAs which are complementary to them. Possesses RNA slicer activity but only on select RNAs bearing 5'- and 3'-flanking sequences to the region of guide-target complementarity. This Gallus gallus (Chicken) protein is Protein argonaute-3 (AGO3).